Reading from the N-terminus, the 379-residue chain is Protein COS2 (379 aa).

Topologically, residues 1-72 (MKENELKNEK…WKLSNNCIYP (72 aa)) are cytoplasmic. Residues 73–93 (LIVSLLVLFLGPIFVLVICGL) traverse the membrane as a helical segment. The Extracellular portion of the chain corresponds to 94–254 (SRKRSLSKQL…FLCCIYVSRG (161 aa)). The chain crosses the membrane as a helical span at residues 255–275 (MCLLLRTLYLGWILFMLVQGF). At 276–379 (QNIRVLIMSM…QLSRSEVLLV (104 aa)) the chain is on the cytoplasmic side.

It belongs to the DUP/COS family.

The protein resides in the membrane. This Saccharomyces cerevisiae (strain ATCC 204508 / S288c) (Baker's yeast) protein is Protein COS2 (COS2).